Reading from the N-terminus, the 653-residue chain is Exocyst complex component EXO70C1 (653 aa).

Basic and acidic residues-rich tracts occupy residues 1-34, 159-177, and 438-451; these read MEKSGNHHHANESSENHDHKSEDHENKQHSDELH, SREEEKKNNNNNNHHDGSN, and NKPEPETKPRQQQR. 3 disordered regions span residues 1 to 50, 159 to 190, and 432 to 456; these read MEKS…HSLV, SREEEKKNNNNNNHHDGSNSDHNNSSTNDSDR, and EANQTDNKPEPETKPRQQQREDDEE.

The protein belongs to the EXO70 family. In terms of assembly, interacts with ROH1A. Binds directly to B1L. Post-translationally, phosphorylated. In terms of tissue distribution, expressed in anthers, pollen and root trichoblast cells.

It is found in the cytoplasm. Functionally, required for global plant growth and for male transmission. Involved in the regulation of tip growth of pollen tube. The protein is Exocyst complex component EXO70C1 of Arabidopsis thaliana (Mouse-ear cress).